The sequence spans 219 residues: Ribose-5-phosphate isomerase A (219 aa).

Residues 28–31, 81–84, and 94–97 each bind substrate; these read TGST, DGAD, and KGGG. The Proton acceptor role is filled by E103. K121 serves as a coordination point for substrate.

This sequence belongs to the ribose 5-phosphate isomerase family. Homodimer.

It carries out the reaction aldehydo-D-ribose 5-phosphate = D-ribulose 5-phosphate. Its pathway is carbohydrate degradation; pentose phosphate pathway; D-ribose 5-phosphate from D-ribulose 5-phosphate (non-oxidative stage): step 1/1. Catalyzes the reversible conversion of ribose-5-phosphate to ribulose 5-phosphate. The polypeptide is Ribose-5-phosphate isomerase A (Photorhabdus laumondii subsp. laumondii (strain DSM 15139 / CIP 105565 / TT01) (Photorhabdus luminescens subsp. laumondii)).